We begin with the raw amino-acid sequence, 579 residues long: Type IV pilus assembly ATPase PilB (579 aa).

340–345 (GSGKTV) contributes to the ATP binding site. C470, C473, C507, and C510 together coordinate Zn(2+).

This sequence belongs to the GSP E family. In terms of assembly, interacts with CpiA.

It localises to the cytoplasm. Its activity is regulated as follows. Inhibited by the inhibitory protein CpiA. In terms of biological role, ATPase component of the type IV pilus (T4P). Acts as a molecular motor to provide the energy that is required for biogenesis of the pilus and the extrusion of substrates generated in the cytoplasm. PilB is required for optimal T4P extension and, consequently, efficient natural transformation. May promote processive T4P extension. This chain is Type IV pilus assembly ATPase PilB, found in Acinetobacter baylyi (strain ATCC 33305 / BD413 / ADP1).